The primary structure comprises 163 residues: Transcription antitermination protein NusB (163 aa).

The tract at residues 1–21 (MTTFLSDSEHPQDVKAPPKSA) is disordered.

This sequence belongs to the NusB family.

Its function is as follows. Involved in transcription antitermination. Required for transcription of ribosomal RNA (rRNA) genes. Binds specifically to the boxA antiterminator sequence of the ribosomal RNA (rrn) operons. The sequence is that of Transcription antitermination protein NusB from Dechloromonas aromatica (strain RCB).